We begin with the raw amino-acid sequence, 199 residues long: MLYPTPIAKLIESFTKLPGIGIKTATRLAFYTIGMSDEDVNNFAKNLLAAKRELTYCSVCGNLTDDDPCNICTDESRDRSTVLVVEDSKDVSAMEKIQEYHGLYHVLHGLISPMNGIGPDDINLKSLLTRLRDNSDIHEVIIATNATADGEATAMYISRVLKPAGITVTRLARGLAVGSDIEYADEVTLLRAIENRTEL.

The C4-type zinc-finger motif lies at 57–72; sequence CSVCGNLTDDDPCNIC. Positions 80–176 constitute a Toprim domain; it reads STVLVVEDSK…TVTRLARGLA (97 aa).

Belongs to the RecR family.

Functionally, may play a role in DNA repair. It seems to be involved in an RecBC-independent recombinational process of DNA repair. It may act with RecF and RecO. The sequence is that of Recombination protein RecR from Streptococcus mutans serotype c (strain ATCC 700610 / UA159).